A 122-amino-acid chain; its full sequence is Large ribosomal subunit protein uL18 (122 aa).

It belongs to the universal ribosomal protein uL18 family. Part of the 50S ribosomal subunit; part of the 5S rRNA/L5/L18/L25 subcomplex. Contacts the 5S and 23S rRNAs.

Its function is as follows. This is one of the proteins that bind and probably mediate the attachment of the 5S RNA into the large ribosomal subunit, where it forms part of the central protuberance. This chain is Large ribosomal subunit protein uL18, found in Synechococcus sp. (strain JA-3-3Ab) (Cyanobacteria bacterium Yellowstone A-Prime).